Reading from the N-terminus, the 625-residue chain is Low affinity potassium transport system protein Kup (625 aa).

The next 12 helical transmembrane spans lie at 15–35 (TIFS…IYII), 58–78 (IIFW…IVSI), 103–123 (FVIV…IIII), 140–160 (LSFE…LFFI), 171–191 (IFSF…LKGI), 218–238 (FFVF…YINI), 251–271 (LFFV…IILL), 282–302 (FLVP…ISII), 340–360 (IYIP…ISIF), 366–386 (LILI…FFSL), 396–416 (FKIL…FIFI), and 422–442 (IICG…IMIT).

Belongs to the HAK/KUP transporter (TC 2.A.72) family.

The protein localises to the cell membrane. The catalysed reaction is K(+)(in) + H(+)(in) = K(+)(out) + H(+)(out). Responsible for the low-affinity transport of potassium into the cell. Likely operates as a K(+):H(+) symporter. This Wigglesworthia glossinidia brevipalpis protein is Low affinity potassium transport system protein Kup.